Reading from the N-terminus, the 171-residue chain is Adenine phosphoribosyltransferase (171 aa).

It belongs to the purine/pyrimidine phosphoribosyltransferase family. Homodimer.

It is found in the cytoplasm. It carries out the reaction AMP + diphosphate = 5-phospho-alpha-D-ribose 1-diphosphate + adenine. The protein operates within purine metabolism; AMP biosynthesis via salvage pathway; AMP from adenine: step 1/1. Functionally, catalyzes a salvage reaction resulting in the formation of AMP, that is energically less costly than de novo synthesis. The polypeptide is Adenine phosphoribosyltransferase (Christiangramia forsetii (strain DSM 17595 / CGMCC 1.15422 / KT0803) (Gramella forsetii)).